Here is a 365-residue protein sequence, read N- to C-terminus: Peptide chain release factor 2 (365 aa).

N5-methylglutamine is present on Gln-251.

It belongs to the prokaryotic/mitochondrial release factor family. Post-translationally, methylated by PrmC. Methylation increases the termination efficiency of RF2.

It is found in the cytoplasm. Functionally, peptide chain release factor 2 directs the termination of translation in response to the peptide chain termination codons UGA and UAA. The chain is Peptide chain release factor 2 from Campylobacter jejuni (strain RM1221).